Reading from the N-terminus, the 266-residue chain is MLAKRIIPCLDVTGGRVVKGVNFVELRDAGDPVEIAARYNDQGADELTFLDITATSDGRDLILHIIEAVASQVFIPLTVGGGVRTVDDVRRLLNAGADKTSFNSAAIANPQVIRDASRKYGAQCIVVAIDAKRRLATDVGRLDANGQAVGEGWDVYSHGGRKNTGLDAVIWARLMAELGAGEILLTSMDRDGTKAGFDLALTRAVSDAVSVPVIASGGVGTLDHLADGIQIGGADAVLAASIFHYGEFTVAQAKAHMAARGIPVRI.

Active-site residues include D11 and D130.

It belongs to the HisA/HisF family. In terms of assembly, heterodimer of HisH and HisF.

The protein localises to the cytoplasm. The catalysed reaction is 5-[(5-phospho-1-deoxy-D-ribulos-1-ylimino)methylamino]-1-(5-phospho-beta-D-ribosyl)imidazole-4-carboxamide + L-glutamine = D-erythro-1-(imidazol-4-yl)glycerol 3-phosphate + 5-amino-1-(5-phospho-beta-D-ribosyl)imidazole-4-carboxamide + L-glutamate + H(+). The protein operates within amino-acid biosynthesis; L-histidine biosynthesis; L-histidine from 5-phospho-alpha-D-ribose 1-diphosphate: step 5/9. In terms of biological role, IGPS catalyzes the conversion of PRFAR and glutamine to IGP, AICAR and glutamate. The HisF subunit catalyzes the cyclization activity that produces IGP and AICAR from PRFAR using the ammonia provided by the HisH subunit. This chain is Imidazole glycerol phosphate synthase subunit HisF, found in Albidiferax ferrireducens (strain ATCC BAA-621 / DSM 15236 / T118) (Rhodoferax ferrireducens).